Consider the following 412-residue polypeptide: Argininosuccinate synthase (412 aa).

ATP-binding positions include 11–19 (AYSGGLDTS) and A37. L-citrulline is bound by residues Y88 and S93. Position 116-124 (116-124 (SHGATGKGN)) interacts with ATP. 3 residues coordinate L-aspartate: T120, N124, and D125. An L-citrulline-binding site is contributed by N124. R128, S181, S190, E271, and Y283 together coordinate L-citrulline.

The protein belongs to the argininosuccinate synthase family. Homotetramer.

It is found in the cytoplasm. Its subcellular location is the cytosol. The enzyme catalyses L-citrulline + L-aspartate + ATP = 2-(N(omega)-L-arginino)succinate + AMP + diphosphate + H(+). The protein operates within amino-acid biosynthesis; L-arginine biosynthesis; L-arginine from L-ornithine and carbamoyl phosphate: step 2/3. Its pathway is nitrogen metabolism; urea cycle; (N(omega)-L-arginino)succinate from L-aspartate and L-citrulline: step 1/1. In terms of biological role, one of the enzymes of the urea cycle, the metabolic pathway transforming neurotoxic amonia produced by protein catabolism into inocuous urea in the liver of ureotelic animals. Catalyzes the formation of arginosuccinate from aspartate, citrulline and ATP and together with ASL it is responsible for the biosynthesis of arginine in most body tissues. The sequence is that of Argininosuccinate synthase from Xenopus tropicalis (Western clawed frog).